The sequence spans 273 residues: MMAARMMAAGLAATALSAHAFRIPTPGEQDARIQTVPYHPEEVVLVRAWNGYVTRIVFDEQEKIIDVAAGFADGWQFSPEGNVLYIKAKSFPAQGSPAQAPEPGLWNTNLLVKTDRRLYDFDLVLASADAATPQALQRSRMAYRLQFRYPAAPQAASRASPVGPAVPAGALNRRYAMQVGNGSDGIAPIAAYDDGRHTWLTFRPGQPFPAVFAVAPDGTETLVNLHIDNQSLVIHRVAPVLMLRSGASVIRIVNQNGDASASPAFECHAEPAL.

Positions 1-20 (MMAARMMAAGLAATALSAHA) are cleaved as a signal peptide.

The protein belongs to the TrbG/VirB9 family.

The protein localises to the cell outer membrane. The polypeptide is Type IV secretion system protein PtlF homolog (ptlF) (Bordetella bronchiseptica (strain ATCC BAA-588 / NCTC 13252 / RB50) (Alcaligenes bronchisepticus)).